The primary structure comprises 815 residues: Putative transcription factor phnE (815 aa).

Residues proline 522–leucine 577 form a disordered region. Positions serine 523–proline 547 are enriched in low complexity. The segment covering leucine 548–leucine 559 has biased composition (pro residues). The span at threonine 563–leucine 577 shows a compositional bias: low complexity.

It localises to the nucleus. Functionally, putative transcription factor that may be involved in the regulation of the expression of the gene cluster that mediates the biosynthesis of phenalenones such as herqueinone, compounds that have been reported to treat tumors, bacterial infections and/or mycoses, and rheumatic diseases. In Penicillium herquei, this protein is Putative transcription factor phnE.